Consider the following 399-residue polypeptide: N-acetylglucosamine-6-phosphate deacetylase (399 aa).

The a divalent metal cation site is built by H65, H67, and E135. 146-147 (AH) lines the substrate pocket. H201 and H222 together coordinate a divalent metal cation. Residues 225–226 (NG), R233, and 254–257 (DGHH) each bind substrate. D279 is a binding site for a divalent metal cation. D279 serves as the catalytic Proton donor/acceptor. 312–314 (LAG) serves as a coordination point for substrate.

The protein belongs to the metallo-dependent hydrolases superfamily. NagA family. In terms of assembly, homodimer. A divalent metal cation is required as a cofactor.

It catalyses the reaction N-acetyl-D-glucosamine 6-phosphate + H2O = D-glucosamine 6-phosphate + acetate. Its pathway is amino-sugar metabolism; N-acetylneuraminate degradation; D-fructose 6-phosphate from N-acetylneuraminate: step 4/5. Involved in the first committed step in the biosynthesis of amino-sugar-nucleotides. Catalyzes the hydrolysis of the N-acetyl group of N-acetylglucosamine-6-phosphate (GlcNAc-6-P) to yield glucosamine 6-phosphate and acetate. This chain is N-acetylglucosamine-6-phosphate deacetylase (manD), found in Vibrio furnissii.